We begin with the raw amino-acid sequence, 476 residues long: tRNA(Ile)-lysidine synthase (476 aa).

Residue Ser-30–Ser-35 coordinates ATP.

This sequence belongs to the tRNA(Ile)-lysidine synthase family.

It localises to the cytoplasm. It catalyses the reaction cytidine(34) in tRNA(Ile2) + L-lysine + ATP = lysidine(34) in tRNA(Ile2) + AMP + diphosphate + H(+). Its function is as follows. Ligates lysine onto the cytidine present at position 34 of the AUA codon-specific tRNA(Ile) that contains the anticodon CAU, in an ATP-dependent manner. Cytidine is converted to lysidine, thus changing the amino acid specificity of the tRNA from methionine to isoleucine. In Bacillus anthracis, this protein is tRNA(Ile)-lysidine synthase.